The following is a 413-amino-acid chain: Putative competence-damage inducible protein (413 aa).

It belongs to the CinA family.

This Thermoanaerobacter pseudethanolicus (strain ATCC 33223 / 39E) (Clostridium thermohydrosulfuricum) protein is Putative competence-damage inducible protein.